The primary structure comprises 1327 residues: Vascular endothelial growth factor receptor 1 (1327 aa).

Residues 1 to 24 (MPRQLLSGTVLLGAAFLLAGSTSG) form the signal peptide. Topologically, residues 25–749 (SKLKVPVLSV…GTVERSNLEL (725 aa)) are extracellular. 7 Ig-like C2-type domains span residues 30 to 121 (PVLS…SIVY), 120 to 222 (VYVF…HRET), 227 to 323 (DIKL…TTVI), 331 to 417 (NLKR…LTVT), 424 to 545 (PQIY…RNVS), 552 to 644 (PSGF…KDVS), and 651 to 737 (PALL…AYVT). Residues Asn48, Asn73, Asn82, Asn98, and Asn125 are each glycosylated (N-linked (GlcNAc...) asparagine). Cys51 and Cys105 are oxidised to a cystine. Cys154 and Cys203 form a disulfide bridge. Asn247 carries N-linked (GlcNAc...) asparagine glycosylation. Cys248 and Cys307 are oxidised to a cystine. N-linked (GlcNAc...) asparagine glycans are attached at residues Asn319, Asn383, Asn398, Asn409, Asn413, Asn470, Asn512, Asn543, Asn593, Asn615, and Asn663. Cys450 and Cys531 are disulfide-bonded. A disulfide bridge connects residues Cys573 and Cys626. Cys672 and Cys721 form a disulfide bridge. The helical transmembrane segment at 750-770 (ITLTCTCVAATLFWLLLTLFI) threads the bilayer. The Cytoplasmic portion of the chain corresponds to 771–1327 (RKLKRPYFSE…SVVHYSQPSI (557 aa)). One can recognise a Protein kinase domain in the interval 819–1151 (LKLGKSLGHG…ELVKRLGDLL (333 aa)). ATP contacts are provided by residues 825–833 (LGHGAFGKV) and Lys853. Positions 950 to 971 (ASVTSSESFASSGFQEDKSLSD) are disordered. The span at 951 to 961 (SVTSSESFASS) shows a compositional bias: low complexity. Catalysis depends on Asp1015, which acts as the Proton acceptor. Tyr1046, Tyr1162, Tyr1202, Tyr1231, Tyr1316, and Tyr1322 each carry phosphotyrosine; by autocatalysis.

The protein belongs to the protein kinase superfamily. Tyr protein kinase family. CSF-1/PDGF receptor subfamily. Interacts with VEGFA, VEGFB and PGF. Monomer in the absence of bound VEGFA, VEGFB or PGF. Homodimer in the presence of bound VEGFA, VEGFB and PGF. Post-translationally, autophosphorylated on tyrosine residues upon ligand binding.

It localises to the cell membrane. Its subcellular location is the endosome. The protein localises to the secreted. It carries out the reaction L-tyrosyl-[protein] + ATP = O-phospho-L-tyrosyl-[protein] + ADP + H(+). Its activity is regulated as follows. Present in an inactive conformation in the absence of bound ligand. Binding of VEGFA, VEGFB or PGF leads to dimerization and activation by autophosphorylation on tyrosine residues. Its function is as follows. Tyrosine-protein kinase that acts as a cell-surface receptor for VEGFA, VEGFB and PGF, and plays an essential role in the regulation of angiogenesis, cell survival, cell migration, macrophage function, and chemotaxis. Acts as a positive regulator of postnatal retinal hyaloid vessel regression. Has very high affinity for VEGFA and relatively low protein kinase activity; may function as a negative regulator of VEGFA signaling by limiting the amount of free VEGFA and preventing its binding to KDR. Ligand binding leads to the activation of several signaling cascades. Activation of PLCG1 leads to the production of the cellular signaling molecules diacylglycerol and inositol 1,4,5-trisphosphate and the activation of protein kinase C. Mediates phosphorylation of PIK3R1, the regulatory subunit of phosphatidylinositol 3-kinase, leading to activation of phosphatidylinositol kinase and the downstream signaling pathway. Mediates activation of MAPK1/ERK2, MAPK3/ERK1 and the MAP kinase signaling pathway, as well as of the AKT1 signaling pathway. Phosphorylates PLCG1. Promotes phosphorylation of AKT1 and CBL. The sequence is that of Vascular endothelial growth factor receptor 1 (FLT1) from Gallus gallus (Chicken).